The primary structure comprises 133 residues: Fluoride-specific ion channel FluC (133 aa).

4 helical membrane passes run 12–32, 41–61, 76–96, and 104–124; these read LAMT…ASLI, WGTL…LVWL, IVGV…CLVF, and MIGI…VAGA. Na(+) is bound by residues Gly81 and Thr84.

This sequence belongs to the fluoride channel Fluc/FEX (TC 1.A.43) family.

It is found in the cell inner membrane. The enzyme catalyses fluoride(in) = fluoride(out). With respect to regulation, na(+) is not transported, but it plays an essential structural role and its presence is essential for fluoride channel function. Its function is as follows. Fluoride-specific ion channel. Important for reducing fluoride concentration in the cell, thus reducing its toxicity. This is Fluoride-specific ion channel FluC from Xanthomonas euvesicatoria pv. vesicatoria (strain 85-10) (Xanthomonas campestris pv. vesicatoria).